Consider the following 287-residue polypeptide: Shikimate dehydrogenase (NADP(+)) (287 aa).

Shikimate-binding positions include 20–22 and threonine 67; that span reads SRS. Lysine 71 acts as the Proton acceptor in catalysis. Glutamate 84 contacts NADP(+). Shikimate is bound by residues asparagine 93 and aspartate 108. Residues 132–136, 156–161, and methionine 226 each bind NADP(+); these read GAGGA and NRTAAR. Tyrosine 228 lines the shikimate pocket. Residue glycine 250 coordinates NADP(+).

Belongs to the shikimate dehydrogenase family. In terms of assembly, homodimer.

It catalyses the reaction shikimate + NADP(+) = 3-dehydroshikimate + NADPH + H(+). The protein operates within metabolic intermediate biosynthesis; chorismate biosynthesis; chorismate from D-erythrose 4-phosphate and phosphoenolpyruvate: step 4/7. In terms of biological role, involved in the biosynthesis of the chorismate, which leads to the biosynthesis of aromatic amino acids. Catalyzes the reversible NADPH linked reduction of 3-dehydroshikimate (DHSA) to yield shikimate (SA). The chain is Shikimate dehydrogenase (NADP(+)) from Bordetella parapertussis (strain 12822 / ATCC BAA-587 / NCTC 13253).